The sequence spans 2168 residues: Genome polyprotein (2168 aa).

Residues 1-20 form a disordered region; that stretch reads MGMQMSKNTAGSHTTVTQAS. Gly2 carries the N-myristoyl glycine; by host lipid modification. The Cytoplasmic portion of the chain corresponds to 2–1479; sequence GMQMSKNTAG…NVSIATTILS (1478 aa). Amphipathic alpha-helix stretches follow at residues 551–567 and 554–575; these read ALQAPVETALNSAISSV and APVETALNSAISSVIAGITAQD. A compositionally biased stretch (polar residues) spans 576-589; it reads TQPSSHNISTSETP. The segment at 576–607 is disordered; it reads TQPSSHNISTSETPALQAAETGASSNASDEGM. Catalysis depends on for protease 2A activity residues His856 and Asp874. Zn(2+) is bound by residues Cys891 and Cys893. Cys945 serves as the catalytic For protease 2A activity. Cys951 and His953 together coordinate Zn(2+). The tract at residues 1085–1157 is membrane-binding; that stretch reads GDDWLKKFTS…EHSCPTTEQQ (73 aa). Residues 1085 to 1223 form an oligomerization region; the sequence is GDDWLKKFTS…TAGTGKSLAT (139 aa). The RNA-binding stretch occupies residues 1106 to 1110; sequence AEKIM. The SF3 helicase domain maps to 1189 to 1347; that stretch reads EKRILGYIQF…YKTHNGTLDV (159 aa). Positions 1354, 1365, and 1370 each coordinate Zn(2+). The segment at 1354–1370 adopts a C4-type; degenerate zinc-finger fold; sequence CEDCCPANFKTCMPLIC. Positions 1397-1404 are RNA-binding; the sequence is EWKRRNQV. An oligomerization region spans residues 1408 to 1413; the sequence is YVRLFQ. Residues 1480–1495 lie within the membrane without spanning it; it reads SLVLLTSVITLVYLVY. Over 1496–2168 the chain is Cytoplasmic; that stretch reads RLFAGYQGPY…SLLREWYEKF (673 aa). Tyr1505 is modified (O-(5'-phospho-RNA)-tyrosine). The 179-residue stretch at 1525 to 1703 folds into the Peptidase C3 domain; sequence GPLMDFGVGM…FCAALKRSYF (179 aa). Catalysis depends on for protease 3C activity residues His1564, Glu1595, and Cys1671. A RdRp catalytic domain is found at 1934–2048; that stretch reads GELFGFDYTA…ASYPYRIDPA (115 aa). Asp1940 and Asp2035 together coordinate Mg(2+).

Belongs to the picornaviruses polyprotein family. Interacts with capsid protein VP1 and capsid protein VP3 to form heterotrimeric protomers. In terms of assembly, interacts with capsid protein VP0, and capsid protein VP3 to form heterotrimeric protomers. Five protomers subsequently associate to form pentamers which serve as building blocks for the capsid. Interacts with capsid protein VP2, capsid protein VP3 and capsid protein VP4 following cleavage of capsid protein VP0. As to quaternary structure, interacts with capsid protein VP1 and capsid protein VP3 in the mature capsid. Interacts with capsid protein VP0 and capsid protein VP1 to form heterotrimeric protomers. Five protomers subsequently associate to form pentamers which serve as building blocks for the capsid. Interacts with capsid protein VP4 in the mature capsid. Interacts with protein 2C; this interaction may be important for virion morphogenesis. In terms of assembly, interacts with capsid protein VP1 and capsid protein VP3. As to quaternary structure, homodimer. Homohexamer; forms a hexameric ring structure with 6-fold symmetry characteristic of AAA+ ATPases. Interacts (via N-terminus) with host RTN3 (via reticulon domain); this interaction is important for viral replication. Interacts with capsid protein VP3; this interaction may be important for virion morphogenesis. In terms of assembly, interacts with protein 3CD. As to quaternary structure, homodimer. Interacts with host GBF1. Interacts (via GOLD domain) with host ACBD3 (via GOLD domain); this interaction allows the formation of a viral protein 3A/ACBD3 heterotetramer with a 2:2 stoichiometry, which will stimulate the recruitment of host PI4KB in order to synthesize PI4P at the viral RNA replication sites. Interacts with RNA-directed RNA polymerase. In terms of assembly, interacts with protein 3AB and with RNA-directed RNA polymerase. As to quaternary structure, interacts with Viral protein genome-linked and with protein 3CD. The cofactor is Mg(2+). Post-translationally, specific enzymatic cleavages in vivo by the viral proteases yield processing intermediates and the mature proteins. In terms of processing, myristoylation is required for the formation of pentamers during virus assembly. Further assembly of 12 pentamers and a molecule of genomic RNA generates the provirion. During virion maturation, immature virions are rendered infectious following cleavage of VP0 into VP4 and VP2. This maturation seems to be an autocatalytic event triggered by the presence of RNA in the capsid and it is followed by a conformational change infectious virion. Post-translationally, myristoylation is required during RNA encapsidation and formation of the mature virus particle. In terms of processing, VPg is uridylylated by the polymerase into VPg-pUpU. This acts as a nucleotide-peptide primer for the genomic RNA replication.

The protein localises to the virion. It is found in the host cytoplasm. The protein resides in the host cytoplasmic vesicle membrane. Its subcellular location is the host nucleus. The catalysed reaction is a ribonucleoside 5'-triphosphate + H2O = a ribonucleoside 5'-diphosphate + phosphate + H(+). It catalyses the reaction Selective cleavage of Tyr-|-Gly bond in the picornavirus polyprotein.. The enzyme catalyses RNA(n) + a ribonucleoside 5'-triphosphate = RNA(n+1) + diphosphate. It carries out the reaction Selective cleavage of Gln-|-Gly bond in the poliovirus polyprotein. In other picornavirus reactions Glu may be substituted for Gln, and Ser or Thr for Gly.. Replication or transcription is subject to high level of random mutations by the nucleotide analog ribavirin. In terms of biological role, forms an icosahedral capsid of pseudo T=3 symmetry with capsid proteins VP2 and VP3. The capsid is 300 Angstroms in diameter, composed of 60 copies of each capsid protein and enclosing the viral positive strand RNA genome. Capsid protein VP1 mainly forms the vertices of the capsid. Capsid protein VP1 interacts with host cell receptor to provide virion attachment to target host cells. This attachment induces virion internalization. Tyrosine kinases are probably involved in the entry process. After binding to its receptor, the capsid undergoes conformational changes. Capsid protein VP1 N-terminus (that contains an amphipathic alpha-helix) and capsid protein VP4 are externalized. Together, they shape a pore in the host membrane through which viral genome is translocated to host cell cytoplasm. Its function is as follows. Forms an icosahedral capsid of pseudo T=3 symmetry with capsid proteins VP2 and VP3. The capsid is 300 Angstroms in diameter, composed of 60 copies of each capsid protein and enclosing the viral positive strand RNA genome. Lies on the inner surface of the capsid shell. After binding to the host receptor, the capsid undergoes conformational changes. Capsid protein VP4 is released, Capsid protein VP1 N-terminus is externalized, and together, they shape a pore in the host membrane through which the viral genome is translocated into the host cell cytoplasm. Functionally, component of immature procapsids, which is cleaved into capsid proteins VP4 and VP2 after maturation. Allows the capsid to remain inactive before the maturation step. In terms of biological role, cysteine protease that cleaves viral polyprotein and specific host proteins. It is responsible for the autocatalytic cleavage between the P1 and P2 regions, which is the first cleavage occurring in the polyprotein. Also cleaves the host translation initiation factor EIF4G1, in order to shut down the capped cellular mRNA translation. Inhibits the host nucleus-cytoplasm protein and RNA trafficking by cleaving host members of the nuclear pores. Counteracts stress granule formation probably by antagonizing its assembly or promoting its dissassembly. Its function is as follows. Plays an essential role in the virus replication cycle by acting as a viroporin. Creates a pore in the host endoplasmic reticulum and as a consequence releases Ca2+ in the cytoplasm of infected cell. In turn, high levels of cytoplasmic calcium may trigger membrane trafficking and transport of viral ER-associated proteins to viroplasms, sites of viral genome replication. Induces and associates with structural rearrangements of intracellular membranes. Displays RNA-binding, nucleotide binding and NTPase activities. May play a role in virion morphogenesis and viral RNA encapsidation by interacting with the capsid protein VP3. Functionally, localizes the viral replication complex to the surface of membranous vesicles. Together with protein 3CD binds the Cis-Active RNA Element (CRE) which is involved in RNA synthesis initiation. Acts as a cofactor to stimulate the activity of 3D polymerase, maybe through a nucleid acid chaperone activity. In terms of biological role, localizes the viral replication complex to the surface of membranous vesicles. It inhibits host cell endoplasmic reticulum-to-Golgi apparatus transport and causes the disassembly of the Golgi complex, possibly through GBF1 interaction. This would result in depletion of MHC, trail receptors and IFN receptors at the host cell surface. Plays an essential role in viral RNA replication by recruiting ACBD3 and PI4KB at the viral replication sites, thereby allowing the formation of the rearranged membranous structures where viral replication takes place. Its function is as follows. Acts as a primer for viral RNA replication and remains covalently bound to viral genomic RNA. VPg is uridylylated prior to priming replication into VPg-pUpU. The oriI viral genomic sequence may act as a template for this. The VPg-pUpU is then used as primer on the genomic RNA poly(A) by the RNA-dependent RNA polymerase to replicate the viral genome. During genome replication, the VPg-RNA linkage is removed by the host TDP2, thereby accelerating replication. During the late stage of the replication cycle, host TDP2 is excluded from sites of viral RNA synthesis and encapsidation, allowing for the generation of progeny virions. Involved in the viral replication complex and viral polypeptide maturation. It exhibits protease activity with a specificity and catalytic efficiency that is different from protease 3C. Protein 3CD lacks polymerase activity. Protein 3CD binds to the 5'UTR of the viral genome. Functionally, replicates the viral genomic RNA on the surface of intracellular membranes. May form linear arrays of subunits that propagate along a strong head-to-tail interaction called interface-I. Covalently attaches UMP to a tyrosine of VPg, which is used to prime RNA synthesis. The positive stranded RNA genome is first replicated at virus induced membranous vesicles, creating a dsRNA genomic replication form. This dsRNA is then used as template to synthesize positive stranded RNA genomes. ss(+)RNA genomes are either translated, replicated or encapsidated. In terms of biological role, major viral protease that mediates proteolytic processing of the polyprotein. Cleaves host EIF5B, contributing to host translation shutoff. Also cleaves host PABPC1, contributing to host translation shutoff. Cleaves host NLRP1, triggers host N-glycine-mediated degradation of the autoinhibitory NLRP1 N-terminal fragment. In Sus scrofa (Pig), this protein is Genome polyprotein.